The following is a 577-amino-acid chain: Aspartate--tRNA(Asp/Asn) ligase (577 aa).

Glu-171 provides a ligand contact to L-aspartate. An aspartate region spans residues 195–198 (QLFK). Position 217 (Arg-217) interacts with L-aspartate. ATP is bound by residues 217–219 (RDE) and Gln-226. His-444 contributes to the L-aspartate binding site. Glu-474 provides a ligand contact to ATP. Arg-481 contributes to the L-aspartate binding site. Residue 526 to 529 (GFDR) coordinates ATP.

It belongs to the class-II aminoacyl-tRNA synthetase family. Type 1 subfamily. As to quaternary structure, homodimer.

The protein resides in the cytoplasm. The catalysed reaction is tRNA(Asx) + L-aspartate + ATP = L-aspartyl-tRNA(Asx) + AMP + diphosphate. Functionally, aspartyl-tRNA synthetase with relaxed tRNA specificity since it is able to aspartylate not only its cognate tRNA(Asp) but also tRNA(Asn). Is 1.7 times more efficient at aminoacylating tRNA(Asp) over tRNA(Asn). Reaction proceeds in two steps: L-aspartate is first activated by ATP to form Asp-AMP and then transferred to the acceptor end of tRNA(Asp/Asn). In Helicobacter pylori (strain ATCC 700392 / 26695) (Campylobacter pylori), this protein is Aspartate--tRNA(Asp/Asn) ligase.